Here is a 150-residue protein sequence, read N- to C-terminus: Anthrone oxygenase gedH (150 aa).

4 helical membrane-spanning segments follow: residues 1-21, 41-61, 73-93, and 128-148; these read MANP…PVFL, GHKL…WVAA, PVLA…CMVS, and LFPL…LVGG.

Belongs to the anthrone oxygenase family.

It is found in the membrane. It catalyses the reaction emodin anthrone + O2 = emodin + H2O + H(+). It participates in secondary metabolite biosynthesis. Functionally, anthrone oxygenase; part of the gene cluster that mediates the biosynthesis of geodin, an intermediate in the biosynthesis of other natural products. The pathway begins with the synthesis of atrochrysone thioester by the polyketide synthase (PKS) gedC. The atrochrysone carboxyl ACP thioesterase gedB then breaks the thioester bond and releases the atrochrysone carboxylic acid from gedC. The atrochrysone carboxylic acid is then converted to atrochrysone which is further transformed into emodin anthrone. The next step is performed by the emodin anthrone oxygenase gedH that catalyzes the oxidation of emodinanthrone to emodin. Emodin O-methyltransferase encoded probably by gedA then catalyzes methylation of the 8-hydroxy group of emodin to form questin. Ring cleavage of questin by questin oxidase gedK leads to desmethylsulochrin via several intermediates including questin epoxide. Another methylation step probably catalyzed by methyltransferase gedG leads to the formation of sulochrin which is further converted to dihydrogeodin by the sulochrin halogenase gedL. Finally, the dihydrogeodin oxidase gedJ catalyzes the stereospecific phenol oxidative coupling reaction converting dihydrogeodin to geodin. This is Anthrone oxygenase gedH from Aspergillus terreus (strain NIH 2624 / FGSC A1156).